The primary structure comprises 189 residues: MNASSRTKPAIDLNKVPPIDHHRTAVTFNCLIMKMTEMLNNFGNKMEDILEKAEQSLDTADRKLRLMESKLAGMSLEDKSTTATPSSAPEIDEIHESNPSSSQIVEETVEEKPEEHTTTVLIKDDPAYSKYFKMLKLGVLEAGVIQKMKSEGVDPSILKRGDEPSRPQAQTSRNYESSGESTASFSDSD.

Residues 35-74 (MTEMLNNFGNKMEDILEKAEQSLDTADRKLRLMESKLAGM) adopt a coiled-coil conformation. Disordered stretches follow at residues 76 to 101 (LEDK…NPSS) and 150 to 189 (SEGV…SDSD). Residues 150-165 (SEGVDPSILKRGDEPS) are compositionally biased toward basic and acidic residues. Residues 167–189 (PQAQTSRNYESSGESTASFSDSD) show a composition bias toward polar residues. Threonine 182 bears the Phosphothreonine mark.

Belongs to the CCDC53 family. Probable component of the WASH complex. Component of the DHIC (ddl-1-containing hsf-1 inhibitory complex), which contains at least ddl-1, ddl-2, hsb-1 and hsf-1. Within the complex, interacts with ddl-2. Within the complex, interacts with hsb-1. Within the complex, interacts with hsf-1. Formation of the DHIC may be dependent upon the Insulin/IGF-1-like signaling (IIS) mediated pathway. Post-translationally, phosphorylated. Phosphorylation on Thr-182 may promote DHIC complex dissociation and consequently the activation of heat-shock transcription factor hsf-1. Phosphorylation is modulated by the Insulin/IGF-1-like signaling (IIS) mediated pathway. In terms of tissue distribution, expressed in pharynx, intestine, body wall muscles, vulva muscles, spermatheca, and several head and tail neurons.

In terms of biological role, acts as a component of the WASH core complex that functions as a nucleation-promoting factor (NPF) at the surface of endosomes, where it recruits and activates the Arp2/3 complex to induce actin polymerization, playing a key role in the fission of tubules that serve as transport intermediates during endosome sorting. Acts as a component of the DHIC (ddl-1-containing hsf-1 inhibitory complex) which modulates lifespan by sequestering the heat-shock transcription factor hsf-1 to negatively regulate its binding to DNA and its transcriptional activity. This is WASH complex subunit homolog 3 (ddl-1) from Caenorhabditis elegans.